The primary structure comprises 233 residues: MIWKTLIVAFMATAVLAQEIDLSDQRREQYRNMLAAQCRKMGAEDKVKDVESSVRNFVECLRGIVDPQAIKKEIEEAKPKGELDEVFKKYCAKAPVLKTCISSLLDGVRPCVDKVAIDHYGPLLNTTNQLIDFVCYKDGERIALFIAHGGSECFKNSTEDLKKCAEEMKNSFPSVEAAKAMSLPDKCGKFDDLTTCMVTSLEKCENPTPANMAESLLKFIRKDSPCNAAVPKD.

Positions 1–17 (MIWKTLIVAFMATAVLA) are cleaved as a signal peptide. Asn-125 and Asn-156 each carry an N-linked (GlcNAc...) asparagine glycan.

The protein belongs to the UPF0408 family. In terms of processing, N-glycosylated. Hemolymph.

The protein resides in the secreted. The protein is 27 kDa hemolymph glycoprotein of Manduca sexta (Tobacco hawkmoth).